The sequence spans 40 residues: Serine proteinase-like BMK-CBP (40 aa).

The Peptidase S1 domain maps to 1–40 (IFGGTFAKNGEYPWMVVIDLPEFACGGVLISKKFVLTAAH). The Charge relay system role is filled by histidine 40.

It belongs to the peptidase S1 family. As to expression, expressed by the venom gland.

The protein resides in the secreted. Binds in a dose-dependent manner to the breast cancer cell line MCF-7. This is Serine proteinase-like BMK-CBP from Olivierus martensii (Manchurian scorpion).